Consider the following 884-residue polypeptide: uncharacterized protein (884 aa).

This is an uncharacterized protein from Mycobacterium tuberculosis (strain ATCC 25618 / H37Rv).